The following is a 468-amino-acid chain: 6-phosphogluconate dehydrogenase, decarboxylating (468 aa).

Residues 9–14 (GLAVMG), 32–34 (NRS), 73–75 (VQA), and Asn101 contribute to the NADP(+) site. Residues Asn101 and 127 to 129 (SGG) contribute to the substrate site. Lys182 acts as the Proton acceptor in catalysis. Position 185 to 186 (185 to 186 (HN)) interacts with substrate. Catalysis depends on Glu189, which acts as the Proton donor. Substrate-binding residues include Tyr190, Lys259, Arg286, Arg444, and His450.

The protein belongs to the 6-phosphogluconate dehydrogenase family. In terms of assembly, homodimer.

It catalyses the reaction 6-phospho-D-gluconate + NADP(+) = D-ribulose 5-phosphate + CO2 + NADPH. It participates in carbohydrate degradation; pentose phosphate pathway; D-ribulose 5-phosphate from D-glucose 6-phosphate (oxidative stage): step 3/3. Functionally, catalyzes the oxidative decarboxylation of 6-phosphogluconate to ribulose 5-phosphate and CO(2), with concomitant reduction of NADP to NADPH. The sequence is that of 6-phosphogluconate dehydrogenase, decarboxylating (gnd) from Staphylococcus aureus (strain COL).